The following is a 435-amino-acid chain: Adenylosuccinate lyase (435 aa).

N(6)-(1,2-dicarboxyethyl)-AMP contacts are provided by residues 4-5 (RY), 73-75 (RHD), and 99-100 (TS). The active-site Proton donor/acceptor is histidine 147. Residue glutamine 218 participates in N(6)-(1,2-dicarboxyethyl)-AMP binding. Residue serine 268 is the Proton donor/acceptor of the active site. Residues serine 269, 274–276 (KKN), asparagine 282, and 313–317 (SAERV) each bind N(6)-(1,2-dicarboxyethyl)-AMP.

This sequence belongs to the lyase 1 family. Adenylosuccinate lyase subfamily. As to quaternary structure, homotetramer. Residues from neighboring subunits contribute catalytic and substrate-binding residues to each active site.

It carries out the reaction N(6)-(1,2-dicarboxyethyl)-AMP = fumarate + AMP. The enzyme catalyses (2S)-2-[5-amino-1-(5-phospho-beta-D-ribosyl)imidazole-4-carboxamido]succinate = 5-amino-1-(5-phospho-beta-D-ribosyl)imidazole-4-carboxamide + fumarate. Its pathway is purine metabolism; AMP biosynthesis via de novo pathway; AMP from IMP: step 2/2. The protein operates within purine metabolism; IMP biosynthesis via de novo pathway; 5-amino-1-(5-phospho-D-ribosyl)imidazole-4-carboxamide from 5-amino-1-(5-phospho-D-ribosyl)imidazole-4-carboxylate: step 2/2. Catalyzes two reactions in de novo purine nucleotide biosynthesis. Catalyzes the breakdown of 5-aminoimidazole- (N-succinylocarboxamide) ribotide (SAICAR or 2-[5-amino-1-(5-phospho-beta-D-ribosyl)imidazole-4-carboxamido]succinate) to 5-aminoimidazole-4-carboxamide ribotide (AICAR or 5-amino-1-(5-phospho-beta-D-ribosyl)imidazole-4-carboxamide) and fumarate, and of adenylosuccinate (ADS or N(6)-(1,2-dicarboxyethyl)-AMP) to adenosine monophosphate (AMP) and fumarate. The polypeptide is Adenylosuccinate lyase (purB) (Deinococcus radiodurans (strain ATCC 13939 / DSM 20539 / JCM 16871 / CCUG 27074 / LMG 4051 / NBRC 15346 / NCIMB 9279 / VKM B-1422 / R1)).